A 132-amino-acid polypeptide reads, in one-letter code: EF-hand calcium-binding domain-containing protein 10 (132 aa).

2 consecutive EF-hand domains span residues methionine 64–cysteine 99 and glutamate 120–phenylalanine 132.

This chain is EF-hand calcium-binding domain-containing protein 10 (Efcab10), found in Mus musculus (Mouse).